We begin with the raw amino-acid sequence, 184 residues long: MQNLTDSFVSLGHWPSAGSFGFNTDILATNPINLSVVLGVLIFFGKGVLSDLLDNRKQRILSTIRNSEELRGGAIEQLEKARARLRKVEMEADEFRVNGYSEIEREKLNLINSTYKNLERLENYKNETIQFEQQRAINQVRQRVFQQALQRALGTLNSCLNNELHLRTISANIGMFGTMKEITD.

The chain crosses the membrane as a helical span at residues 27–49 (LATNPINLSVVLGVLIFFGKGVL).

This sequence belongs to the ATPase B chain family. As to quaternary structure, F-type ATPases have 2 components, F(1) - the catalytic core - and F(0) - the membrane proton channel. F(1) has five subunits: alpha(3), beta(3), gamma(1), delta(1), epsilon(1). F(0) has four main subunits: a(1), b(1), b'(1) and c(10-14). The alpha and beta chains form an alternating ring which encloses part of the gamma chain. F(1) is attached to F(0) by a central stalk formed by the gamma and epsilon chains, while a peripheral stalk is formed by the delta, b and b' chains.

Its subcellular location is the plastid. It is found in the chloroplast thylakoid membrane. F(1)F(0) ATP synthase produces ATP from ADP in the presence of a proton or sodium gradient. F-type ATPases consist of two structural domains, F(1) containing the extramembraneous catalytic core and F(0) containing the membrane proton channel, linked together by a central stalk and a peripheral stalk. During catalysis, ATP synthesis in the catalytic domain of F(1) is coupled via a rotary mechanism of the central stalk subunits to proton translocation. Its function is as follows. Component of the F(0) channel, it forms part of the peripheral stalk, linking F(1) to F(0). The chain is ATP synthase subunit b, chloroplastic from Platanus occidentalis (Sycamore).